Reading from the N-terminus, the 599-residue chain is Zinc finger BED domain-containing protein 3 (599 aa).

Positions 70–104 are disordered; that stretch reads LNGGMGSPGNGPGTPLSRNNYAHHHQQHQNQQHVG. The segment covering 72–81 has biased composition (gly residues); the sequence is GGMGSPGNGP. The BED-type zinc-finger motif lies at 123 to 176; the sequence is VKTAKVWRYFDELPTIEQAAECRICRKKIKATNSSTTGMIRHLRSCHVQEYQLV. Residues Cys144, Cys147, His164, and His169 each contribute to the Zn(2+) site. 2 disordered regions span residues 208-283 and 440-491; these read GIEN…QCQN and ATSS…SSID. 2 stretches are compositionally biased toward low complexity: residues 223-246 and 268-283; these read SQKS…SHFS and SNSI…QCQN. Polar residues predominate over residues 440–455; it reads ATSSYEDVSVNESQMA. A compositionally biased stretch (acidic residues) spans 460 to 483; it reads GDEEEEIMEEEVEEDENVEIEDDT.

As to expression, expressed in neuronal cell bodies in the ventral cord and HSN neurons.

The protein localises to the nucleus. Functionally, probable transcription factor. Involved in vulval organogenesis. During vulval development, may play a role in the regulation of cell cycle regulators such as cul-1. Positively modulates expression of homeobox protein lin-39, perhaps by binding to regulatory regions of the lin-39 gene, acting in the vulval lineage. Plays a role in larval molting. This Caenorhabditis elegans protein is Zinc finger BED domain-containing protein 3.